The following is a 100-amino-acid chain: NAD(P)H-quinone oxidoreductase subunit 4L, chloroplastic (100 aa).

3 consecutive transmembrane segments (helical) span residues 1–21 (MLEH…YGLI), 31–51 (ICLE…SDFF), and 60–80 (IFAI…LAIL).

The protein belongs to the complex I subunit 4L family. NDH is composed of at least 16 different subunits, 5 of which are encoded in the nucleus.

It localises to the plastid. Its subcellular location is the chloroplast thylakoid membrane. The enzyme catalyses a plastoquinone + NADH + (n+1) H(+)(in) = a plastoquinol + NAD(+) + n H(+)(out). It catalyses the reaction a plastoquinone + NADPH + (n+1) H(+)(in) = a plastoquinol + NADP(+) + n H(+)(out). NDH shuttles electrons from NAD(P)H:plastoquinone, via FMN and iron-sulfur (Fe-S) centers, to quinones in the photosynthetic chain and possibly in a chloroplast respiratory chain. The immediate electron acceptor for the enzyme in this species is believed to be plastoquinone. Couples the redox reaction to proton translocation, and thus conserves the redox energy in a proton gradient. In Trachelium caeruleum (Blue throatwort), this protein is NAD(P)H-quinone oxidoreductase subunit 4L, chloroplastic.